Here is a 355-residue protein sequence, read N- to C-terminus: Putative inositol monophosphatase 3 (355 aa).

Residues 16 to 36 (VPATIFAILLTIVLVYFLNFH) traverse the membrane as a helical segment. Residues E127, D167, L169, D170, and D292 each coordinate Mg(2+). E127 provides a ligand contact to substrate. Residues 169 to 172 (LDAT) and D292 contribute to the substrate site.

Belongs to the inositol monophosphatase superfamily. The cofactor is Mg(2+).

It is found in the membrane. The catalysed reaction is a myo-inositol phosphate + H2O = myo-inositol + phosphate. It functions in the pathway polyol metabolism; myo-inositol biosynthesis; myo-inositol from D-glucose 6-phosphate: step 2/2. The polypeptide is Putative inositol monophosphatase 3 (Drosophila pseudoobscura pseudoobscura (Fruit fly)).